The chain runs to 118 residues: Large ribosomal subunit protein bL20 (118 aa).

It belongs to the bacterial ribosomal protein bL20 family.

In terms of biological role, binds directly to 23S ribosomal RNA and is necessary for the in vitro assembly process of the 50S ribosomal subunit. It is not involved in the protein synthesizing functions of that subunit. This is Large ribosomal subunit protein bL20 from Parvibaculum lavamentivorans (strain DS-1 / DSM 13023 / NCIMB 13966).